Consider the following 60-residue polypeptide: Transcriptional regulatory protein SenN (60 aa).

Residues 11–31 (RFRKRKTFGNQILPLELLIEK) constitute a DNA-binding region (H-T-H motif).

The protein to B.subtilis SenS.

In terms of biological role, regulates the expression of extracellular-protein genes of Bacillus natto. This is Transcriptional regulatory protein SenN (senN) from Bacillus subtilis subsp. natto.